Reading from the N-terminus, the 362-residue chain is Methylthioribose-1-phosphate isomerase (362 aa).

The Proton donor role is filled by Asp-252.

The protein belongs to the eIF-2B alpha/beta/delta subunits family. MtnA subfamily.

It localises to the cytoplasm. The protein resides in the nucleus. It catalyses the reaction 5-(methylsulfanyl)-alpha-D-ribose 1-phosphate = 5-(methylsulfanyl)-D-ribulose 1-phosphate. Its pathway is amino-acid biosynthesis; L-methionine biosynthesis via salvage pathway; L-methionine from S-methyl-5-thio-alpha-D-ribose 1-phosphate: step 1/6. Catalyzes the interconversion of methylthioribose-1-phosphate (MTR-1-P) into methylthioribulose-1-phosphate (MTRu-1-P). In Drosophila persimilis (Fruit fly), this protein is Methylthioribose-1-phosphate isomerase.